The primary structure comprises 156 residues: ATP synthase subunit b (156 aa).

The chain crosses the membrane as a helical span at residues 11–31 (AIAFAVFVWFCMKYVWPPLLA).

It belongs to the ATPase B chain family. F-type ATPases have 2 components, F(1) - the catalytic core - and F(0) - the membrane proton channel. F(1) has five subunits: alpha(3), beta(3), gamma(1), delta(1), epsilon(1). F(0) has three main subunits: a(1), b(2) and c(10-14). The alpha and beta chains form an alternating ring which encloses part of the gamma chain. F(1) is attached to F(0) by a central stalk formed by the gamma and epsilon chains, while a peripheral stalk is formed by the delta and b chains.

It is found in the cell inner membrane. In terms of biological role, f(1)F(0) ATP synthase produces ATP from ADP in the presence of a proton or sodium gradient. F-type ATPases consist of two structural domains, F(1) containing the extramembraneous catalytic core and F(0) containing the membrane proton channel, linked together by a central stalk and a peripheral stalk. During catalysis, ATP synthesis in the catalytic domain of F(1) is coupled via a rotary mechanism of the central stalk subunits to proton translocation. Functionally, component of the F(0) channel, it forms part of the peripheral stalk, linking F(1) to F(0). This is ATP synthase subunit b from Psychromonas ingrahamii (strain DSM 17664 / CCUG 51855 / 37).